The primary structure comprises 117 residues: Cell cycle protein GpsB (117 aa).

Residues 32 to 70 (LDNVIKDYDAFVKENQRLQDENERLLAKVDELTRQVQVG) adopt a coiled-coil conformation.

It belongs to the GpsB family. Forms polymers through the coiled coil domains. Interacts with PBP1, MreC and EzrA.

Its subcellular location is the cytoplasm. In terms of biological role, divisome component that associates with the complex late in its assembly, after the Z-ring is formed, and is dependent on DivIC and PBP2B for its recruitment to the divisome. Together with EzrA, is a key component of the system that regulates PBP1 localization during cell cycle progression. Its main role could be the removal of PBP1 from the cell pole after pole maturation is completed. Also contributes to the recruitment of PBP1 to the division complex. Not essential for septum formation. This Levilactobacillus brevis (strain ATCC 367 / BCRC 12310 / CIP 105137 / JCM 1170 / LMG 11437 / NCIMB 947 / NCTC 947) (Lactobacillus brevis) protein is Cell cycle protein GpsB.